The chain runs to 1836 residues: MPENPAAEKMQVLQVLDRLRGKLQEKGDTTQNEKLSAFYETLKSPLFNQILTLQQSIKQLKGQLSHIPSDCSANFDFSRKGLLVFTDGSITNGNAHRPCSSITASESLPWTQRSGNEDFTSVIQQMAQGRHIEYIDIERPSTGGLGFSVVALRSQSLGLIDIFVKEVHPGSVADRDQRLKENDQILAINDTPLDQNISHQQAIALLQQATGSLRLVVAREVGHTQSRTSTSSADTTLPETVRWGHTEDVELINDGSGLGFGIVGGKSSGVVVRTIVPGGLADRDGRLQTGDHILKIGSTNVQGMTSEQVAQVLRNCGNSVRMLVARDPVGEIAVTPPTPASLPVALPVVATRTLGSDSSPFETYNVELVKKDGQSLGIRIVGYVGTAHPGEASGIYVKSIIPGSAAYHNGQIQVNDKIVAVDGVNIQGFANQDVVEVLRNAGQVVHLTLVRRKTSLSASPFEQPSSREAVAEPPEVPELTGSLKPETNSRMEAEEIGERLDNLRKDTVQALEKPDVYPEDIPGCPENELKSRWENLLGPDYEVMVATLDTQIADDEELQKYSKLLPIHTLRLGMEVDSFDGHHYISSIAPGGPVDTLNLLQPEDELLEVNGVQLYGKSRREAVSFLKEVPPPFTLVCCRRLFDDEASVDEPRTVEPSLLEAEVDRSVDVSTEDDDGELALWSPEVKTVELVKDCKGLGFSILDYQDPLDPMRSVIVIRSLVADGVAERSGELLPGDRLVSVNEFSLDNATLAEAVEVLKAVPPGVVHLGICKPLVEEEKEEKEEHFIFHSNNNGDNSESPETVHEIHSSLILEAPQGFRDEPYLEELVDEPFLDLGKSLQFQQKDMDSSSEAWEMHEFLSPRLERRGEEREMLVDEEYEIYQDRLRDMEAHPPPPHIREPTSASPRLDLQAGPQWLHADLSGGEILECHDTESMMTAYPQEMQDYSFSTTDMMKETFGLDSRPPMPSSEGNGQHGRFDDLEHLHSLVSHGLDLGMMTPSDLQGPGVLVDLPAVTQRREQEELPLYRLPSARVVTKPSSHVGMVSSRHANAACELPEREEGEGEETPNFSHWGPPRIVEIFREPNVSLGISIVGGQTVIKRLKNGEELKGIFIKQVLEDSPAGKTKALKTGDKILEVSGVDLQNASHAEAVEAIKSAGNPVVFVVQSLSSTPRVIPSVNNKGKTPPQNQDQNTQEKKAKRHGTAPPPMKLPPPYRAPSADTEESEEDSALTDKKIRQRYADLPGELHIIELEKDKNGLGLSLAGNKDRSRMSIFVVGINPDGPAAADGRMRVGDELLEINNQILYGRSHQNASAIIKTAPTRVKLVFIRNEDAVNQMAVAPFPVPSHSPSPVEDLGGTEPVSSEEDSSVDAKPLPERESSKPEDLTQAVDDSMVAEQEKASESPDSAARQMKQPGYSAQVSSSSQEIPSAPAPLCQSTHADVTGSGNFQAPLSVDPAPLSVDPATCPIVPGQEMIIEISKGRSGLGLSIVGGKDTPLDAIVIHEVYEEGAAARDGRLWAGDQILEVNGVDLRSSSHEEAITALRQTPQKVRLVIYRDEAQYRDEENLEVFLVDLQKKTGRGLGLSIVGKRSGSGVFISDIVKGGAADLDGRLIRGDQILSVNGEDVRQASQETVATILKCVQGLVQLEIGRLRAGSWASSRKTSQNSQGDQHSAHSSCRPSFAPVITSLQNLVGTKRSSDPPQKCTEEEPRTVEIIRELSDALGVSIAGGKGSPLGDIPIFIAMIQANGVAARTQKLKVGDRIVSINGQPLDGLSHTDAVNLLKNAFGRIILQVVADTNISAIATQLEMMSAGSQLGSPTADRHPQDPEELLQRTAD.

The region spanning 1–65 (MPENPAAEKM…SIKQLKGQLS (65 aa)) is the L27 domain. PDZ domains are found at residues 134–221 (YIDI…AREV), 248–328 (DVEL…ARDP), and 365–453 (NVEL…VRRK). Phosphoserine occurs at positions 455, 459, and 482. Residues 456–466 (LSASPFEQPSS) are compositionally biased toward polar residues. The disordered stretch occupies residues 456–492 (LSASPFEQPSSREAVAEPPEVPELTGSLKPETNSRME). The PDZ 4 domain occupies 555-641 (DEELQKYSKL…PFTLVCCRRL (87 aa)). Phosphoserine is present on Ser-647. PDZ domains are found at residues 687 to 773 (TVEL…ICKP) and 1074 to 1166 (PRIV…VVQS). Polar residues predominate over residues 1173–1191 (VIPSVNNKGKTPPQNQDQN). Positions 1173 to 1232 (VIPSVNNKGKTPPQNQDQNTQEKKAKRHGTAPPPMKLPPPYRAPSADTEESEEDSALTDK) are disordered. Over residues 1203–1214 (APPPMKLPPPYR) the composition is skewed to pro residues. Residue Ser-1217 is modified to Phosphoserine. Acidic residues predominate over residues 1219–1228 (DTEESEEDSA). One can recognise a PDZ 7 domain in the interval 1245-1328 (LHIIELEKDK…PTRVKLVFIR (84 aa)). The segment at 1341-1448 (FPVPSHSPSP…ADVTGSGNFQ (108 aa)) is disordered. The segment covering 1372–1383 (PLPERESSKPED) has biased composition (basic and acidic residues). Composition is skewed to polar residues over residues 1415-1426 (YSAQVSSSSQEI) and 1434-1448 (CQST…GNFQ). PDZ domains are found at residues 1472–1555 (EMII…VIYR) and 1568–1650 (VFLV…EIGR). Thr-1545 is modified (phosphothreonine). The disordered stretch occupies residues 1657–1678 (ASSRKTSQNSQGDQHSAHSSCR). A PDZ 10 domain is found at 1709–1795 (PRTVEIIREL…FGRIILQVVA (87 aa)). The segment at 1813 to 1836 (SQLGSPTADRHPQDPEELLQRTAD) is disordered.

Forms a ternary complex with PALS1 and CRB1. Component of a complex whose core is composed of ARHGAP17, AMOT, PALS1, INADL/PATJ and PARD3/PAR3. Forms a heterotrimeric complex composed of MMP5, LIN7B and PATJ; the N-terminal L27 domain of PALS1 interacts with the L27 domain of PATJ and the C-terminal L27 domain of PALS1 interacts with the L27 domain of LIN7B. Component of a complex composed of CRB3, PALS1 and PATJ. As part of the Crumbs complex; interacts with WWP1, the interaction is enhanced by AMOTL2 and facilitates WWP1 localization to the plasma membrane. The Crumbs complex promotes monoubiquitination of AMOTL2 by WWP1, which activates the Hippo signaling pathway. Interacts (via N-terminus) with PALS1/PALS (via PDZ domain). Interacts with TJP3/ZO-3 and CLDN1/claudin-1. Interacts with ASIC3, KCNJ10, KCNJ15, GRIN2A, GRIN2B, GRIN2C, GRIN2D, NLGN2, and HTR2A. Interacts with MPP7. Directly interacts with HTR4. Interacts (via PDZ domain 8) with WWC1 (via the ADDV motif). Interacts with SLC6A4. Interacts (via C-terminus) with ARHGEF18. Interacts with NPHP1. Interacts with PARD3/PAR3. Interacts (via PDZ1-6 domains) with TJP1/ZO1; the interaction is required for attachment and extension of TJP1/ZO1 condensates along the apical cell interface. Abundantly expressed in germ cells, also expressed in testes and seminiferous tubules, with faint expression in Sertoli cells (at protein level).

It is found in the cell junction. Its subcellular location is the tight junction. It localises to the apical cell membrane. The protein resides in the cytoplasm. The protein localises to the perinuclear region. In terms of biological role, scaffolding protein that facilitates the localization of proteins to the cell membrane. Required for the correct formation of tight junctions and epithelial apico-basal polarity. Acts (via its L27 domain) as an apical connector and elongation factor for multistranded TJP1/ZO1 condensates that form a tight junction belt, thereby required for the formation of the tight junction-mediated cell barrier. Positively regulates epithelial cell microtubule elongation and cell migration, possibly via facilitating localization of PRKCI/aPKC and PAR3D/PAR3 at the leading edge of migrating cells. Plays a role in the correct reorientation of the microtubule-organizing center during epithelial migration. May regulate the surface expression and/or function of ASIC3 in sensory neurons. May recruit ARHGEF18 to apical cell-cell boundaries. The chain is InaD-like protein from Rattus norvegicus (Rat).